The following is a 429-amino-acid chain: Adenylosuccinate synthetase (429 aa).

GTP is bound by residues 12 to 18 and 40 to 42; these read GDEGKGK and GHT. The Proton acceptor role is filled by aspartate 13. Residues aspartate 13 and glycine 40 each coordinate Mg(2+). IMP-binding positions include 13-16, 38-41, threonine 128, arginine 142, glutamine 223, threonine 238, and arginine 302; these read DEGK and NAGH. Histidine 41 acts as the Proton donor in catalysis. Residue 298-304 participates in substrate binding; that stretch reads TVTGRPR. Residues arginine 304, 330–332, and 412–414 each bind GTP; these read LLD and SVG.

The protein belongs to the adenylosuccinate synthetase family. Homodimer. Requires Mg(2+) as cofactor.

The protein resides in the cytoplasm. It carries out the reaction IMP + L-aspartate + GTP = N(6)-(1,2-dicarboxyethyl)-AMP + GDP + phosphate + 2 H(+). It participates in purine metabolism; AMP biosynthesis via de novo pathway; AMP from IMP: step 1/2. In terms of biological role, plays an important role in the de novo pathway of purine nucleotide biosynthesis. Catalyzes the first committed step in the biosynthesis of AMP from IMP. This Lactobacillus johnsonii (strain CNCM I-12250 / La1 / NCC 533) protein is Adenylosuccinate synthetase.